Reading from the N-terminus, the 240-residue chain is uncharacterized protein (240 aa).

Positions 26-52 are disordered; that stretch reads DYVDDGESLPTRQSVKNQREQKKKQGK. Residues 57 to 77 traverse the membrane as a helical segment; sequence LFTVLAVIFVFVPVIVLVTLF. A disordered region spans residues 100–185; it reads KYEVVPKSED…QPAEPVQNVP (86 aa). Residues 103 to 159 are compositionally biased toward basic and acidic residues; it reads VVPKSEDKNDTADTKETALQKESKKEPEDSKPKEQTAADKKQTAVAEKEDSPNKEEA. Residues 160–185 are compositionally biased toward low complexity; it reads TAAAASSSQSTVQQQEQPAEPVQNVP. Positions 189–235 constitute a LysM domain; sequence VKHTVQKKETLYRISMKYYKSRTGEEKIRAYNHLNGNDVYTGQVLDI.

The protein localises to the membrane. This is an uncharacterized protein from Bacillus subtilis (strain 168).